Reading from the N-terminus, the 72-residue chain is Metallothionein-like protein type 2 A (72 aa).

Belongs to the metallothionein superfamily. Type 15 family. In terms of tissue distribution, leaves and roots.

Its function is as follows. Metallothioneins have a high content of cysteine residues that bind various heavy metals. The protein is Metallothionein-like protein type 2 A (MTA) of Solanum lycopersicum (Tomato).